Reading from the N-terminus, the 210-residue chain is MRPRLWLLLAAQLTVLHGNSVLQQTPAYIKVQTNKMVMLSCEAKISLSNMRIYWLRQRQAPSSDSHHEFLALWDSAKGTIHGEEVEQEKIAVFRDASRFILNLTSVKPEDSGIYFCMIVGSPELTFGKGTQLSVVDFLPTTAQPTKKSTLKKRVCRLPRPETQKGPLCSPITLGLLVAGVLVLLVSLGVAIHLCCRRRRARLRFMKQFYK.

An N-terminal signal peptide occupies residues methionine 1–valine 21. The Ig-like V-type domain maps to leucine 22–leucine 132. Topologically, residues leucine 22–proline 170 are extracellular. An intrachain disulfide couples cysteine 41 to cysteine 116. Residue asparagine 102 is glycosylated (N-linked (GlcNAc...) asparagine). A helical transmembrane segment spans residues isoleucine 171–isoleucine 191. At histidine 192–lysine 210 the chain is on the cytoplasmic side. Tyrosine 209 is modified (phosphotyrosine).

Forms disulfide-linked heterodimers with CD8A at the cell surface. Interacts with CD3D; this interaction couples TCR-CD3 with CD8. Interacts with LCK. In terms of processing, phosphorylated as a consequence of T-cell activation. Palmitoylated at the cytoplasmic tail and thereby targets the heterodimer CD8A/CD8B to lipid rafts unlike CD8A homodimers. Isoform 1, isoform 3, isoform 5, isoform 6, isoform 7 and isoform 8 are expressed in both thymus and peripheral CD8+ T-cells. Expression of isoform 1 is higher in thymus CD8+ T-cells than in peripheral CD8+ T-cells. Expression of isoform 6 is higher in peripheral CD8+ T-cells than in thymus CD8+ T-cells.

Its subcellular location is the cell membrane. The protein resides in the secreted. Its function is as follows. Integral membrane glycoprotein that plays an essential role in the immune response and serves multiple functions in responses against both external and internal offenses. In T-cells, functions primarily as a coreceptor for MHC class I molecule:peptide complex. The antigens presented by class I peptides are derived from cytosolic proteins while class II derived from extracellular proteins. Interacts simultaneously with the T-cell receptor (TCR) and the MHC class I proteins presented by antigen presenting cells (APCs). In turn, recruits the Src kinase LCK to the vicinity of the TCR-CD3 complex. A palmitoylation site in the cytoplasmic tail of CD8B chain contributes to partitioning of CD8 into the plasma membrane lipid rafts where signaling proteins are enriched. Once LCK recruited, it initiates different intracellular signaling pathways by phosphorylating various substrates ultimately leading to lymphokine production, motility, adhesion and activation of cytotoxic T-lymphocytes (CTLs). Additionally, plays a critical role in thymic selection of CD8+ T-cells. This chain is T-cell surface glycoprotein CD8 beta chain (CD8B), found in Homo sapiens (Human).